Here is a 185-residue protein sequence, read N- to C-terminus: uncharacterized protein (185 aa).

The region spanning 39–177 (LWHASAGVLV…SWPFVPDSRA (139 aa)) is the Nudix hydrolase domain. Residues 77–99 (GGVVDPGETPQETAIREVGEELG) carry the Nudix box motif. Residues Glu93 and Glu97 each contribute to the Mg(2+) site.

Belongs to the Nudix hydrolase family. It depends on Mg(2+) as a cofactor.

This is an uncharacterized protein from Rhodococcus erythropolis (Arthrobacter picolinophilus).